We begin with the raw amino-acid sequence, 719 residues long: Aminodeoxychorismate synthase (719 aa).

The region spanning 5-199 is the Glutamine amidotransferase type-1 domain; that stretch reads RTLLIDNYDS…RDLSLRAAGH (195 aa). The active-site Nucleophile is the Cys86. Catalysis depends on residues His173 and Glu175. The tract at residues 199–224 is disordered; it reads HRPPHTERIPAPAPAPAPAPAPAPPA. The span at 209–224 shows a compositional bias: pro residues; that stretch reads APAPAPAPAPAPAPPA.

In the C-terminal section; belongs to the anthranilate synthase component I family.

It carries out the reaction chorismate + L-glutamine = 4-amino-4-deoxychorismate + L-glutamate. Its pathway is antibiotic biosynthesis. Functionally, involved in pristinamycin I biosynthesis. Catalyzes the biosynthesis of 4-amino-4-deoxychorismate (ADC) from chorismate and glutamine. The sequence is that of Aminodeoxychorismate synthase from Streptomyces pristinaespiralis.